Here is a 111-residue protein sequence, read N- to C-terminus: Phosphoribosyl-ATP pyrophosphatase (111 aa).

The protein belongs to the PRA-PH family.

The protein resides in the cytoplasm. The catalysed reaction is 1-(5-phospho-beta-D-ribosyl)-ATP + H2O = 1-(5-phospho-beta-D-ribosyl)-5'-AMP + diphosphate + H(+). Its pathway is amino-acid biosynthesis; L-histidine biosynthesis; L-histidine from 5-phospho-alpha-D-ribose 1-diphosphate: step 2/9. The polypeptide is Phosphoribosyl-ATP pyrophosphatase (Pseudomonas putida (strain GB-1)).